Consider the following 65-residue polypeptide: Large ribosomal subunit protein eL24 (65 aa).

Zn(2+) is bound by residues C6, C9, C32, and C36. The segment at 6-36 (CAFCGADIPPGYGIMYVKSDGTVLRYCSRKC) adopts a C4-type zinc-finger fold.

The protein belongs to the eukaryotic ribosomal protein eL24 family. As to quaternary structure, part of the 50S ribosomal subunit. Forms a cluster with proteins L3 and L14. Zn(2+) is required as a cofactor.

In terms of biological role, binds to the 23S rRNA. In Pyrobaculum arsenaticum (strain DSM 13514 / JCM 11321 / PZ6), this protein is Large ribosomal subunit protein eL24.